We begin with the raw amino-acid sequence, 282 residues long: Anamorsin homolog (282 aa).

Residues 1-140 are N-terminal SAM-like domain; it reads MADLQGKAVL…KPVYEVGAAA (140 aa). Residues 141–192 are linker; the sequence is PLKLSFAKKKQSGAAAPAAQVAEVWTIATDDFDDDDLLENDGDELLDAEDLA. 4 residues coordinate [2Fe-2S] cluster: cysteine 203, cysteine 214, cysteine 217, and cysteine 219. The segment at 203 to 219 is fe-S binding site A; sequence CEVGAGGKRRACKNCTC. 4 residues coordinate [4Fe-4S] cluster: cysteine 243, cysteine 246, cysteine 254, and cysteine 257. Short sequence motifs (cx2C motif) lie at residues 243-246 and 254-257; these read CGNC and CASC. The segment at 243–257 is fe-S binding site B; that stretch reads CGNCYLGDAFRCASC.

This sequence belongs to the anamorsin family. As to quaternary structure, monomer. Requires [2Fe-2S] cluster as cofactor. [4Fe-4S] cluster serves as cofactor.

Its subcellular location is the cytoplasm. The protein resides in the mitochondrion intermembrane space. Its function is as follows. Component of the cytosolic iron-sulfur (Fe-S) protein assembly (CIA) machinery. Required for the maturation of extramitochondrial Fe-S proteins. Part of an electron transfer chain functioning in an early step of cytosolic Fe-S biogenesis, facilitating the de novo assembly of a [4Fe-4S] cluster on the cytosolic Fe-S scaffold complex. Electrons are transferred from NADPH via a FAD- and FMN-containing diflavin oxidoreductase. Together with the diflavin oxidoreductase, also required for the assembly of the diferric tyrosyl radical cofactor of ribonucleotide reductase (RNR), probably by providing electrons for reduction during radical cofactor maturation in the catalytic small subunit. This Monosiga brevicollis (Choanoflagellate) protein is Anamorsin homolog.